Reading from the N-terminus, the 212-residue chain is Adenylate kinase (212 aa).

10 to 15 lines the ATP pocket; sequence GAGKGT. Residues 30 to 59 are NMP; it reads STGDMFRAAMANQTEMGVLAKSYIDKGELV. Residues T31, R36, 57–59, 86–89, and Q93 each bind AMP; these read ELV and GYPR. The tract at residues 127–159 is LID; sequence GRIIHRVTGETFHKVFNPPVDYKEEDYYQREDD. Residues R128 and 137-138 contribute to the ATP site; that span reads TF. Residues R156 and R167 each contribute to the AMP site. Q195 lines the ATP pocket.

The protein belongs to the adenylate kinase family. In terms of assembly, monomer.

It is found in the cytoplasm. The enzyme catalyses AMP + ATP = 2 ADP. It functions in the pathway purine metabolism; AMP biosynthesis via salvage pathway; AMP from ADP: step 1/1. In terms of biological role, catalyzes the reversible transfer of the terminal phosphate group between ATP and AMP. Plays an important role in cellular energy homeostasis and in adenine nucleotide metabolism. In Streptococcus pneumoniae (strain JJA), this protein is Adenylate kinase.